Reading from the N-terminus, the 512-residue chain is Citrate synthase (512 aa).

Residues H288, H327, and D383 contribute to the active site. A disordered region spans residues 483 to 512 (AIPKTATGSKSQLSASIEQSFGEKISPQSH). The segment covering 488–501 (ATGSKSQLSASIEQ) has biased composition (polar residues).

The protein belongs to the citrate synthase family.

The protein resides in the cytoplasm. It carries out the reaction oxaloacetate + acetyl-CoA + H2O = citrate + CoA + H(+). It participates in carbohydrate metabolism; tricarboxylic acid cycle; isocitrate from oxaloacetate: step 1/2. This chain is Citrate synthase (gltA), found in Dictyostelium discoideum (Social amoeba).